A 441-amino-acid polypeptide reads, in one-letter code: Protein SPMIP7 (441 aa).

Testis specific. Expressed at the spermatid stage.

Essential for normal spermatogenesis. The sequence is that of Protein SPMIP7 (Spmip7) from Mus musculus (Mouse).